The following is a 113-amino-acid chain: U11-theraphotoxin-Hhn1a (113 aa).

The signal sequence occupies residues 1-21 (MNTVRVTFLPVFVLAVSLGQA). A propeptide spanning residues 22 to 74 (DKDENRMEMQEKTEQGKSYLDFAENLLLQKLEELEAKLLEEDSEESRNSRQKR) is cleaved from the precursor. Residues 61–83 (EEDSEESRNSRQKRCIGEGVPCD) are disordered. 3 cysteine pairs are disulfide-bonded: Cys-75/Cys-90, Cys-82/Cys-95, and Cys-89/Cys-110.

Belongs to the neurotoxin 14 (magi-1) family. 01 (HNTX-16) subfamily. As to expression, expressed by the venom gland.

The protein localises to the secreted. This is U11-theraphotoxin-Hhn1a from Cyriopagopus hainanus (Chinese bird spider).